A 722-amino-acid chain; its full sequence is MSLFLFAIFQLALGSPGAPNGPNVPLQLTGVRRGLDHVQKLPSEAFSFKLFGKNLAEDGYYFTTATRCEDSHLSTVSTVRATVKESYCSYAILSVPEGLPFNVSTSVYHLCHKNATIYTQKFLVVHEKKAAAAKYMGDEIVFCFFCILMSAYASGMTLGYMKFSMIDLNTMLKIAEGDAAKKRVRRIMHFRRRSTQLVVTFSLFSSVFTVLFTTTCEKMLHGVSNEDVLKMAVPALICLIFAEMIPQAVCNSKFGFNLAASLWFVTVIIFFVTLPIAYPASLVLGRFLKRDVREVMTPEEKTCLLRSMAQNEREKTILENATTFTLKKVGQLMVPIEEVFMLSRSQKLNRSTVLTLVEKGYTRIPVYDNKNRSVIVGMLNMKNFNLLMVKTNLIDEPTVKEALHALELLKDRTVKFAVKYVNIEMNAHLLLNRMKTGDFHFACVVEYSAYDSKVVGIITIEDILEKLIGKIDEINELRVRSSIDDRGDNAVIGWCREAGSDKKYPLPFSQQLRILQHLLSECQVLKSLDIGIMKAKQILSLDRIRVGKKNDKLELHDLLLVIFEGTVLVTNEVETFERVIDVPSQRSSSTVNSQQHRQQTTDNSRSTPVPVLIIGKPLLNRLMKSLGSPFSEPLGPKDNVSELVVVSEEASYFKLRLEDLMNSINGCRKVDRNGHTTTGESLLQTLNSRASTSTSTTPACRTPLSVDARSQDETTPFMEKQE.

A signal peptide spans 1–17 (MSLFLFAIFQLALGSPG). The Extracellular portion of the chain corresponds to 18–139 (APNGPNVPLQ…AAAAKYMGDE (122 aa)). N-linked (GlcNAc...) asparagine glycosylation is found at N102 and N114. The CNNM transmembrane domain maps to 132-318 (AAKYMGDEIV…AQNEREKTIL (187 aa)). The helical transmembrane segment at 140-160 (IVFCFFCILMSAYASGMTLGY) threads the bilayer. Residues 161 to 196 (MKFSMIDLNTMLKIAEGDAAKKRVRRIMHFRRRSTQ) are Cytoplasmic-facing. Residues 197–217 (LVVTFSLFSSVFTVLFTTTCE) traverse the membrane as a helical segment. Over 218 to 227 (KMLHGVSNED) the chain is Extracellular. A helical transmembrane segment spans residues 228 to 248 (VLKMAVPALICLIFAEMIPQA). The Cytoplasmic segment spans residues 249 to 257 (VCNSKFGFN). Residues 258 to 278 (LAASLWFVTVIIFFVTLPIAY) form a helical membrane-spanning segment. Residues 279–722 (PASLVLGRFL…ETTPFMEKQE (444 aa)) are Extracellular-facing. 3 N-linked (GlcNAc...) asparagine glycosylation sites follow: N320, N349, and N371. CBS domains follow at residues 333–396 (MVPI…LIDE) and 413–473 (TVKF…KIDE). Residues 584 to 607 (SQRSSSTVNSQQHRQQTTDNSRST) are disordered. N-linked (GlcNAc...) asparagine glycosylation is present at N639. The interval 686–722 (LNSRASTSTSTTPACRTPLSVDARSQDETTPFMEKQE) is disordered. The span at 688–703 (SRASTSTSTTPACRTP) shows a compositional bias: low complexity.

Belongs to the ACDP family.

It is found in the cell membrane. Its function is as follows. Probable metal transporter. Probably acts redundantly with the other metal transport proteins cnnm-1, cnnm-2, cnnm-3 and cnnm-4 to regulate Mg(2+) homeostasis. The sequence is that of Metal transporter cnnm-5 from Caenorhabditis elegans.